The primary structure comprises 197 residues: Guanylate kinase (197 aa).

Ser-2 bears the N-acetylserine mark. The 183-residue stretch at 4-186 folds into the Guanylate kinase-like domain; that stretch reads PRPVVLSGPS…AYAELKEALS (183 aa). An ATP-binding site is contributed by 14–19; sequence GAGKST. 37-51 is a substrate binding site; sequence SHTTRNPRPGEENGK. Residues Arg-44, Arg-137, and Arg-148 contribute to the active site. Arg-137 contributes to the ATP binding site. 171-172 contributes to the ATP binding site; that stretch reads ND.

This sequence belongs to the guanylate kinase family. In terms of assembly, monomer. Interacts with RD3. Widely expressed.

It is found in the photoreceptor inner segment. The protein localises to the cytoplasm. The protein resides in the cytosol. It localises to the mitochondrion. It carries out the reaction GMP + ATP = GDP + ADP. With respect to regulation, up-regulated by RD3. Functionally, catalyzes the phosphorylation of GMP to GDP. Essential enzyme for recycling GMP and indirectly, cyclic GMP (cGMP). Involved in the cGMP metabolism in photoreceptors. It may also have a role in the survival and growth progression of some tumors. In addition to its physiological role, GUK1 is essential for converting prodrugs used for the treatment of cancers and viral infections into their pharmacologically active metabolites, most notably acyclovir, ganciclovir, and 6-thioguanine and its closely related analog 6-mercaptopurine. The polypeptide is Guanylate kinase (Homo sapiens (Human)).